The chain runs to 344 residues: Neurotrimin (344 aa).

Positions 1 to 33 (MGVCGYLFLPWKCLVVVSLRLLFLVPTGVPVRS) are cleaved as a signal peptide. 3 consecutive Ig-like C2-type domains span residues 39–126 (PKAM…PKTS), 136–218 (PKIV…VKVT), and 222–309 (PPYI…ASIM). N-linked (GlcNAc...) asparagine glycosylation is found at N44, N70, and N152. A disulfide bond links C57 and C115. 2 disulfides stabilise this stretch: C157-C201 and C243-C295. N-linked (GlcNAc...) asparagine glycosylation is found at N284, N292, and N305. Residue N321 is the site of GPI-anchor amidated asparagine; alternate attachment. A glycan (N-linked (GlcNAc...) asparagine; alternate) is linked at N321. Positions 322 to 344 (GTSRRAGCIWLLPLLVLHLLLKF) are cleaved as a propeptide — removed in mature form.

The protein belongs to the immunoglobulin superfamily. IgLON family.

It localises to the cell membrane. Functionally, neural cell adhesion molecule. The protein is Neurotrimin (Ntm) of Mus musculus (Mouse).